Consider the following 127-residue polypeptide: Small ribosomal subunit protein uS12 (127 aa).

A disordered region spans residues 8–28; that stretch reads IRTEREKARQKTKSPALKQCP. Position 89 is a 3-methylthioaspartic acid (D89). Residues 102–127 are disordered; the sequence is LDTAGVKDRKQGRSKYGTKRPKEAKK. Over residues 113-127 the composition is skewed to basic residues; sequence GRSKYGTKRPKEAKK.

Belongs to the universal ribosomal protein uS12 family. As to quaternary structure, part of the 30S ribosomal subunit. Contacts proteins S8 and S17. May interact with IF1 in the 30S initiation complex.

With S4 and S5 plays an important role in translational accuracy. Functionally, interacts with and stabilizes bases of the 16S rRNA that are involved in tRNA selection in the A site and with the mRNA backbone. Located at the interface of the 30S and 50S subunits, it traverses the body of the 30S subunit contacting proteins on the other side and probably holding the rRNA structure together. The combined cluster of proteins S8, S12 and S17 appears to hold together the shoulder and platform of the 30S subunit. This is Small ribosomal subunit protein uS12 from Nostoc sp. (strain PCC 7120 / SAG 25.82 / UTEX 2576).